Consider the following 393-residue polypeptide: MQQTKKLTQSDIIIAVMSGPFLQRGEPALISKWYRTKMALTNGVDLVVELPYAFATQKAETFANGAISILNALGVSEICFGSEDGQAENFYNTIAIQKNEEETFNRLVKQFMNAGNSYAKATSEAFLHILPPEKNVDMSQPNNILGLQYIKAILLQNSSMQAQTIKRFASHYHDETFHDQHIASATSIRKQLFNENSSSTTIEPFIPKMTASLLENYKQNYGTLHNWEKYFSFFKYKLMTMSSEDLQHIYEMEEGLEHRILSKIQNSSSFYSFMEALKTKRYTWTRLQRACTHILTNTTKEEIHKANIEQHAPYIRLLGMSQKGQTYLSRNKKKIELPILTHTKTFEHPTLDIERKSNAVYFSIMQEPLRTQLLKQDATHHPIRYDEITKKFL.

ATP is bound by residues glycine 81, asparagine 142, and arginine 167.

This sequence belongs to the TmcAL family.

It is found in the cytoplasm. It catalyses the reaction cytidine(34) in elongator tRNA(Met) + acetate + ATP = N(4)-acetylcytidine(34) in elongator tRNA(Met) + AMP + diphosphate. In terms of biological role, catalyzes the formation of N(4)-acetylcytidine (ac(4)C) at the wobble position of elongator tRNA(Met), using acetate and ATP as substrates. First activates an acetate ion to form acetyladenylate (Ac-AMP) and then transfers the acetyl group to tRNA to form ac(4)C34. This chain is tRNA(Met) cytidine acetate ligase, found in Bacillus mycoides (strain KBAB4) (Bacillus weihenstephanensis).